We begin with the raw amino-acid sequence, 453 residues long: Plasmepsin II (453 aa).

Residues 1–37 lie on the Cytoplasmic side of the membrane; that stretch reads MDITVREHDFKHGFIKSNSTFDGLNIDNSKNKKKIQK. Positions 1–124 are excised as a propeptide; the sequence is MDITVREHDF…SGLTKTNYLG (124 aa). A helical; Signal-anchor for type II membrane protein membrane pass occupies residues 38-58; sequence GFQILYVLLFCSVMCGLFYYV. At 59–453 the chain is on the lumenal side; that stretch reads YENVWLQRDN…VGIALAKKNL (395 aa). Positions 140 to 447 constitute a Peptidase A1 domain; that stretch reads FYGDAEVGDN…DYDNQSVGIA (308 aa). Aspartate 158 is an active-site residue. Residues cysteine 171 and cysteine 176 are joined by a disulfide bond. Residue aspartate 338 is part of the active site. Residues cysteine 373 and cysteine 409 are joined by a disulfide bond.

Belongs to the peptidase A1 family. Component of the hemozoin formation complex (HFC) composed of falcipains FP2A and/or FP2B, plasmepsins PMII, PMIII/HAP and PMIV, heme detoxifying protein HDP and falcilysin FLN. The HFC complex is involved in hemoglobin degradation and detoxification of heme in the food vacuole during the asexual blood stage. Not N-glycosylated. In terms of processing, proteolytically cleaved into the soluble active mature form in the digestive vacuole by cysteine protease falcipains; the process begins at the early ring stage. Proteolysis requires an acidic environment. In absence of falcipains, autoprocessing may serve as an alternate activation system.

Its subcellular location is the membrane. The protein localises to the vacuole lumen. It is found in the vacuole membrane. The enzyme catalyses Hydrolysis of the bonds linking certain hydrophobic residues in hemoglobin or globin. Also cleaves small molecules substrates such as Ala-Leu-Glu-Arg-Thr-Phe-|-Phe(NO2)-Ser-Phe-Pro-Thr.. With respect to regulation, inhibited by pepstatin A. Inhibited by KNI derived compounds (KNI-10742, 10743, 10395, 10333, and 10343). During the asexual blood stage, participates in initial cleavage of native host hemoglobin (Hb) resulting in Hb denaturation. May cleave preferentially denatured hemoglobin that has been cleaved by PMI. Digestion of host Hb is an essential step which provides the parasite with amino acids for protein synthesis, and regulates osmolarity. The sequence is that of Plasmepsin II from Plasmodium falciparum (isolate 3D7).